The primary structure comprises 116 residues: PTS system galactose-specific EIIA component (116 aa).

Positions 11–109 constitute a PTS EIIA type-3 domain; sequence DDYMGVVMGI…AVEVVGQERR (99 aa). Residue histidine 85 is the Tele-phosphohistidine intermediate of the active site. Histidine 85 is modified (phosphohistidine; by HPr). Aspartate 88 is a binding site for Mg(2+).

Homotrimer. Mg(2+) is required as a cofactor.

In terms of biological role, the phosphoenolpyruvate-dependent sugar phosphotransferase system (sugar PTS), a major carbohydrate active transport system, catalyzes the phosphorylation of incoming sugar substrates concomitantly with their translocation across the cell membrane. Involved in galactose transport with PtcB and Lmg_0963. The protein is PTS system galactose-specific EIIA component of Lactococcus lactis subsp. cremoris (strain MG1363).